We begin with the raw amino-acid sequence, 408 residues long: Lysosome-associated membrane glycoprotein 3 (408 aa).

An N-terminal signal peptide occupies residues 1-20 (MPGQTSAVAVLLCLAVILHG). At 21–373 (YQIREKEFPE…IVDECLSDYT (353 aa)) the chain is on the lumenal side. N-linked (GlcNAc...) asparagine glycosylation is found at N55 and N225. A disulfide bond links C230 and C267. A glycan (N-linked (GlcNAc...) asparagine) is linked at N284. C331 and C368 are disulfide-bonded. Residues 374–394 (VVLPVVGIIVVVLCVVGLGIY) form a helical membrane-spanning segment. Residues 395 to 408 (KIRQRRQSSAYQRI) lie on the Cytoplasmic side of the membrane.

Belongs to the LAMP family. In terms of assembly, monomer. Interacts with FURIN.

The protein resides in the cell surface. It is found in the lysosome membrane. The protein localises to the cytoplasmic vesicle membrane. Its subcellular location is the early endosome membrane. Its function is as follows. Lysosomal membrane glycoprotein which plays a role in the unfolded protein response (UPR) that contributes to protein degradation and cell survival during proteasomal dysfunction. Plays a role in the process of fusion of the lysosome with the autophagosome, thereby modulating the autophagic process. Promotes hepatocellular lipogenesis through activation of the PI3K/Akt pathway. May also play a role in dendritic cell function and in adaptive immunity. In Rattus norvegicus (Rat), this protein is Lysosome-associated membrane glycoprotein 3 (Lamp3).